The primary structure comprises 317 residues: Ferrochelatase (317 aa).

Positions 192 and 271 each coordinate Fe cation.

The protein belongs to the ferrochelatase family.

It is found in the cytoplasm. It carries out the reaction heme b + 2 H(+) = protoporphyrin IX + Fe(2+). The protein operates within porphyrin-containing compound metabolism; protoheme biosynthesis; protoheme from protoporphyrin-IX: step 1/1. Catalyzes the ferrous insertion into protoporphyrin IX. This is Ferrochelatase from Geobacter metallireducens (strain ATCC 53774 / DSM 7210 / GS-15).